The sequence spans 688 residues: MGREYPLEKFRNIGIMAHIDAGKTTTTERILFYTGRTHKIGEVHEGQATMDWMAQEQERGITITSAATFCKWKGYAINIIDTPGHVDFTVEVERSLRVLDGAVTVLDAKSGVEPQTETVWRQADNYGVPRLVYVNKMDSTGADFYMCVNTLRDRLHCNAIPIQIPIGSESEFKGIVNLVKNEAIIYEDDLGTVMDEVEIPGDLKDEAEKYRTELIEAISELDEDIMMKYLEGEELTEEEIISAIRKGVISNKIVPVLCGSSYKNKGVQPMIDAVVDFMPSPLDIPPIKGTDPETGEETDRPADDNQPLSALAFKIATDPFVGKLAFTRIYSGIMKSGTYVYNSTKGKKERIARLVKMHSNRREEVDELRAGDLGAIVGLKDTTTGNTLCDEQNAVVLESMEFPEPVIHVAIEPKTKAGQEKMGIALSKLAEEDPTFKTHTDQETGQTIISGMGELHLEIIVDRLQREFKVECNVGKPQVAYKETIRKTVKAEGKFVRQSGGHGQYGHCWIEMSPSEEGYSFENAIVGGTIPKEYISPIDEGIKQASETGTVAGYPAINFKVKLYDGSYHDVDSSEMAFKIAASMAFKNAMSKADPVLLEPMMRVEVTVPEEYMGDVIGDINSRRGRIEGMDPRAGAQVIRSFVPLSEMFGYATVLRSRTQGRGVYSMTFDHYEEVPKSIQEKITGEKK.

Positions 8-282 (EKFRNIGIMA…AVVDFMPSPL (275 aa)) constitute a tr-type G domain. Residues 17 to 24 (AHIDAGKT), 81 to 85 (DTPGH), and 135 to 138 (NKMD) contribute to the GTP site. A disordered region spans residues 282 to 305 (LDIPPIKGTDPETGEETDRPADDN).

This sequence belongs to the TRAFAC class translation factor GTPase superfamily. Classic translation factor GTPase family. EF-G/EF-2 subfamily.

It is found in the cytoplasm. In terms of biological role, catalyzes the GTP-dependent ribosomal translocation step during translation elongation. During this step, the ribosome changes from the pre-translocational (PRE) to the post-translocational (POST) state as the newly formed A-site-bound peptidyl-tRNA and P-site-bound deacylated tRNA move to the P and E sites, respectively. Catalyzes the coordinated movement of the two tRNA molecules, the mRNA and conformational changes in the ribosome. The sequence is that of Elongation factor G from Clostridium kluyveri (strain NBRC 12016).